Consider the following 530-residue polypeptide: 6-phosphofructo-2-kinase/fructose-2,6-bisphosphatase 2 (530 aa).

Over residues 1–15 (MSGASSSEQNNNSYE) the composition is skewed to polar residues. The disordered stretch occupies residues 1-21 (MSGASSSEQNNNSYETKPPNL). At Ser-2 the chain carries N-acetylserine. The interval 2 to 248 (SGASSSEQNN…VYYLMNIHVQ (247 aa)) is 6-phosphofructo-2-kinase. Position 29 is a phosphoserine; by PKA (Ser-29). 45–53 (GLPARGKTY) lines the ATP pocket. Arg-78 and Arg-102 together coordinate beta-D-fructose 6-phosphate. Asp-128 is an active-site residue. Thr-130 and Arg-136 together coordinate beta-D-fructose 6-phosphate. Cys-158 is an active-site residue. ATP is bound at residue 167 to 172 (NILEVK). Residues Lys-172, Arg-193, and Tyr-197 each contribute to the beta-D-fructose 6-phosphate site. Positions 249-530 (PRTIYLCRHG…PPALASCPCH (282 aa)) are fructose-2,6-bisphosphatase. Beta-D-fructose 2,6-bisphosphate is bound at residue Arg-256. His-257 functions as the Tele-phosphohistidine intermediate in the catalytic mechanism. Gly-269 is a binding site for beta-D-fructose 2,6-bisphosphate. Glu-326 serves as the catalytic Proton donor/acceptor. Beta-D-fructose 2,6-bisphosphate contacts are provided by Tyr-337, Arg-351, Lys-355, Tyr-366, Gln-392, and Arg-396. 348–351 (FALR) is a binding site for ATP. Residues 392-396 (QAVMR) and Tyr-428 each bind ATP. A disordered region spans residues 446–512 (RDKPTNNFPK…GPTSRRPKSH (67 aa)). Over residues 450 to 476 (TNNFPKNQTPVRMRRNSFTPLSSSNTI) the composition is skewed to polar residues. At Ser-466 the chain carries Phosphoserine; by AMPK and PKA. At Thr-468 the chain carries Phosphothreonine. Phosphothreonine; by PKC is present on Thr-475. 2 positions are modified to phosphoserine: Ser-483 and Ser-493.

The protein in the C-terminal section; belongs to the phosphoglycerate mutase family. Homodimer. Forms a heterodimer with PFKFB3. In terms of processing, phosphorylation by AMPK stimulates activity.

The catalysed reaction is beta-D-fructose 2,6-bisphosphate + H2O = beta-D-fructose 6-phosphate + phosphate. It carries out the reaction beta-D-fructose 6-phosphate + ATP = beta-D-fructose 2,6-bisphosphate + ADP + H(+). Its activity is regulated as follows. Phosphorylation results in the activation of the kinase activity. Synthesis and degradation of fructose 2,6-bisphosphate. The sequence is that of 6-phosphofructo-2-kinase/fructose-2,6-bisphosphatase 2 (PFKFB2) from Pongo abelii (Sumatran orangutan).